Consider the following 622-residue polypeptide: Putative DEAD-box ATP-dependent RNA helicase 44 (622 aa).

Residues 50–97 (DRRSIVQISRSNSDNDDGNRPRDVKRERHRSHDHDRNRESDREFRERE) are disordered. Residues 66 to 97 (DGNRPRDVKRERHRSHDHDRNRESDREFRERE) show a composition bias toward basic and acidic residues. The 196-residue stretch at 241–436 (IPLGLEQRDV…RKFLRNPVVV (196 aa)) folds into the Helicase ATP-binding domain. 254 to 261 (SATGSGKT) is an ATP binding site. A DEAD box motif is present at residues 367 to 370 (DEAD). In terms of domain architecture, Helicase C-terminal spans 460 to 606 (RLKKLIDDLG…LVPPELARHE (147 aa)).

This sequence belongs to the DEAD box helicase family. DDX23/PRP28 subfamily.

It catalyses the reaction ATP + H2O = ADP + phosphate + H(+). This chain is Putative DEAD-box ATP-dependent RNA helicase 44 (RH44), found in Arabidopsis thaliana (Mouse-ear cress).